The sequence spans 449 residues: UDP-N-acetylglucosamine 1-carboxyvinyltransferase (449 aa).

51-52 is a binding site for phosphoenolpyruvate; the sequence is KN. Arginine 121 lines the UDP-N-acetyl-alpha-D-glucosamine pocket. Cysteine 145 serves as the catalytic Proton donor. A 2-(S-cysteinyl)pyruvic acid O-phosphothioketal modification is found at cysteine 145. UDP-N-acetyl-alpha-D-glucosamine is bound by residues 150-154, aspartate 333, and isoleucine 355; that span reads RPVDQ.

This sequence belongs to the EPSP synthase family. MurA subfamily.

It localises to the cytoplasm. It carries out the reaction phosphoenolpyruvate + UDP-N-acetyl-alpha-D-glucosamine = UDP-N-acetyl-3-O-(1-carboxyvinyl)-alpha-D-glucosamine + phosphate. It functions in the pathway cell wall biogenesis; peptidoglycan biosynthesis. Functionally, cell wall formation. Adds enolpyruvyl to UDP-N-acetylglucosamine. This chain is UDP-N-acetylglucosamine 1-carboxyvinyltransferase, found in Burkholderia lata (strain ATCC 17760 / DSM 23089 / LMG 22485 / NCIMB 9086 / R18194 / 383).